The following is a 357-amino-acid chain: Alkanal monooxygenase alpha chain (357 aa).

Belongs to the bacterial luciferase oxidoreductase family. Heterodimer of an alpha and a beta chain.

It carries out the reaction a long-chain fatty aldehyde + FMNH2 + O2 = a long-chain fatty acid + hnu + FMN + H2O + 2 H(+). In terms of biological role, light-emitting reaction in luminous bacteria. In Kryptophanaron alfredi symbiont, this protein is Alkanal monooxygenase alpha chain (luxA).